The following is a 120-amino-acid chain: Protein FAM241B (120 aa).

The interval Gln12–Ala59 is disordered. Composition is skewed to low complexity over residues Arg19–Gly39 and Pro47–Ala59. Phosphoserine is present on Ser61. The chain crosses the membrane as a helical span at residues Ile91–Val111.

It belongs to the FAM241 family.

The protein localises to the membrane. Functionally, may play a role in lysosome homeostasis. The protein is Protein FAM241B of Mus musculus (Mouse).